The sequence spans 404 residues: uncharacterized protein (404 aa).

11 consecutive transmembrane segments (helical) span residues 9-29, 36-56, 76-96, 103-123, 135-155, 162-182, 199-219, 236-256, 288-308, 319-339, and 366-386; these read IYLI…PYLS, GFGE…FIGL, LVVK…LLFC, IMFY…QLSI, FIQV…LEFY, KRIL…YLIY, AFFY…SFFI, LGLY…ILAI, IVPI…LFFL, IIVF…VNYL, and LIFT…LGIL.

It belongs to the polysaccharide synthase family. HI_0867/HI_1700 subfamily.

It localises to the cell membrane. This is an uncharacterized protein from Haemophilus influenzae (strain ATCC 51907 / DSM 11121 / KW20 / Rd).